Here is a 343-residue protein sequence, read N- to C-terminus: 4-hydroxy-2-oxovalerate aldolase 1 (343 aa).

In terms of domain architecture, Pyruvate carboxyltransferase spans 8–260 (ITVHDMSLRD…ETGVDVFAIS (253 aa)). Residue 16–17 (RD) coordinates substrate. Asp-17 contributes to the Mn(2+) binding site. His-20 acts as the Proton acceptor in catalysis. Residues Ser-170 and His-199 each contribute to the substrate site. Residues His-199 and His-201 each coordinate Mn(2+). Tyr-290 is a substrate binding site.

It belongs to the 4-hydroxy-2-oxovalerate aldolase family.

The catalysed reaction is (S)-4-hydroxy-2-oxopentanoate = acetaldehyde + pyruvate. In Burkholderia cenocepacia (strain ATCC BAA-245 / DSM 16553 / LMG 16656 / NCTC 13227 / J2315 / CF5610) (Burkholderia cepacia (strain J2315)), this protein is 4-hydroxy-2-oxovalerate aldolase 1 (bphI).